The following is a 62-amino-acid chain: Large ribosomal subunit protein uL30 (62 aa).

This sequence belongs to the universal ribosomal protein uL30 family. Part of the 50S ribosomal subunit.

This is Large ribosomal subunit protein uL30 from Gluconobacter oxydans (strain 621H) (Gluconobacter suboxydans).